Here is a 323-residue protein sequence, read N- to C-terminus: Lipoyl synthase (323 aa).

Residues Cys65, Cys70, Cys76, Cys91, Cys95, Cys98, and Ser304 each contribute to the [4Fe-4S] cluster site. The Radical SAM core domain maps to 77–293 (FNNGTATFMI…KKEALSIGFT (217 aa)).

This sequence belongs to the radical SAM superfamily. Lipoyl synthase family. The cofactor is [4Fe-4S] cluster.

The protein localises to the cytoplasm. The enzyme catalyses [[Fe-S] cluster scaffold protein carrying a second [4Fe-4S](2+) cluster] + N(6)-octanoyl-L-lysyl-[protein] + 2 oxidized [2Fe-2S]-[ferredoxin] + 2 S-adenosyl-L-methionine + 4 H(+) = [[Fe-S] cluster scaffold protein] + N(6)-[(R)-dihydrolipoyl]-L-lysyl-[protein] + 4 Fe(3+) + 2 hydrogen sulfide + 2 5'-deoxyadenosine + 2 L-methionine + 2 reduced [2Fe-2S]-[ferredoxin]. Its pathway is protein modification; protein lipoylation via endogenous pathway; protein N(6)-(lipoyl)lysine from octanoyl-[acyl-carrier-protein]: step 2/2. Functionally, catalyzes the radical-mediated insertion of two sulfur atoms into the C-6 and C-8 positions of the octanoyl moiety bound to the lipoyl domains of lipoate-dependent enzymes, thereby converting the octanoylated domains into lipoylated derivatives. The polypeptide is Lipoyl synthase (Buchnera aphidicola subsp. Acyrthosiphon pisum (strain 5A)).